Reading from the N-terminus, the 119-residue chain is C-C motif chemokine 24 (119 aa).

The N-terminal stretch at 1–26 is a signal peptide; sequence MAGLMTIVTSLLFLGVCAHHIIPTGS. Disulfide bonds link Cys33-Cys58 and Cys34-Cys74. The N-linked (GlcNAc...) asparagine glycan is linked to Asn115.

This sequence belongs to the intercrine beta (chemokine CC) family. N-glycosylated. In terms of tissue distribution, activated monocytes and activated T lymphocytes.

Its subcellular location is the secreted. Functionally, chemotactic for resting T-lymphocytes, and eosinophils. Has lower chemotactic activity for neutrophils but none for monocytes and activated lymphocytes. Is a strong suppressor of colony formation by a multipotential hematopoietic progenitor cell line. Binds to CCR3. The protein is C-C motif chemokine 24 of Homo sapiens (Human).